Here is a 398-residue protein sequence, read N- to C-terminus: uncharacterized protein (398 aa).

Residues 88–108 form a helical membrane-spanning segment; it reads IGFTIGFAIFFILLFLLSNMV.

The protein to B.megaterium SpoIV.

The protein localises to the cell membrane. This is an uncharacterized protein from Bacillus subtilis (strain 168).